We begin with the raw amino-acid sequence, 320 residues long: Solute carrier family 35 member B1 (320 aa).

Helical transmembrane passes span 9–29, 49–69, 81–103, 134–154, 166–186, 202–222, 241–261, and 283–303; these read GLRL…YGIL, FALS…KLLI, QSWL…NSAL, YPLT…LFMY, TVGY…LTGV, MMLS…VLTG, IVLF…TVVY, and VILF…LVFL. Residues 316–320 carry the Di-lysine motif motif; it reads KKPSH.

It belongs to the nucleotide-sugar transporter family. SLC35B subfamily.

It localises to the endoplasmic reticulum membrane. Probable sugar transporter. The protein is Solute carrier family 35 member B1 (slc35b1) of Xenopus laevis (African clawed frog).